Consider the following 147-residue polypeptide: Large ribosomal subunit protein uL15 (147 aa).

Positions 1 to 46 (MSIRLENLSYTPGARKEKHRKGRGHAAGKGKQAGRGQSGQKKRSTV) are disordered. Positions 16-28 (KEKHRKGRGHAAG) are enriched in basic residues.

It belongs to the universal ribosomal protein uL15 family. As to quaternary structure, part of the 50S ribosomal subunit.

Its function is as follows. Binds to the 23S rRNA. The sequence is that of Large ribosomal subunit protein uL15 from Mesomycoplasma hyopneumoniae (strain 7448) (Mycoplasma hyopneumoniae).